Here is a 62-residue protein sequence, read N- to C-terminus: MKFLVFAFILALMVSMIGADSSEEKFLRRIGRFGYGYGPYQPVPEQPLYPQPYQPQYQQYTF.

The first 19 residues, 1 to 19 (MKFLVFAFILALMVSMIGA), serve as a signal peptide directing secretion. The hydroxyapatite-binding; inhibits crystal growth stretch occupies residues 20 to 25 (DSSEEK). Residues Ser-21 and Ser-22 each carry the phosphoserine modification. Positions 25–56 (KFLRRIGRFGYGYGPYQPVPEQPLYPQPYQPQ) form a cross-link, isoglutamyl lysine isopeptide (Lys-Gln); in form cyclo-statherin Q-37. The isoglutamyl lysine isopeptide (Lys-Gln); in form cyclo-statherin Q-39 cross-link spans 25–58 (KFLRRIGRFGYGYGPYQPVPEQPLYPQPYQPQYQ). The tract at residues 38–62 (GPYQPVPEQPLYPQPYQPQYQQYTF) is hydrophobic; inhibits precipitation of calcium phosphate salts.

It belongs to the histatin/statherin family. Post-translationally, substrate for transglutaminase-2. More than 95% of the cyclized peptide is cyclo-statherin Q-37, and less than 5% is cyclo-statherin Q-39. Cyclized forms account for about 1% of total statherin in saliva. In terms of processing, sulfated on tyrosine residues. Secreted by parotid and submandibular glands.

It localises to the secreted. Functionally, salivary protein that stabilizes saliva supersaturated with calcium salts by inhibiting the precipitation of calcium phosphate salts. It also modulates hydroxyapatite crystal formation on the tooth surface. The sequence is that of Statherin (STATH) from Homo sapiens (Human).